A 117-amino-acid chain; its full sequence is Transcription elongation factor SPT4 (117 aa).

Residues 1 to 40 (MSLETVPKDLRHLRACLLCSLVKTIDQFEYDGCDNCESYL) are interaction with SUPT5H. Residues 16-36 (CLLCSLVKTIDQFEYDGCDNC) form a C4-type zinc finger.

This sequence belongs to the SPT4 family. Interacts with SUPT5H to form the DSIF complex. DSIF interacts with RNA polymerase II and with the positive transcription elongation factor b complex (P-TEFb complex), which is composed of CDK9 and cyclin-T.

The protein resides in the nucleus. In terms of biological role, may function as a component of the DRB sensitivity-inducing factor complex (DSIF complex), which regulates transcription elongation by RNA polymerase II. Probably enhances transcriptional pausing at sites proximal to the promoter, which may facilitate the assembly of an elongation competent RNA polymerase II complex. Also acts to stimulate transcriptional elongation at low nucleotide concentrations. Regulation of transcriptional elongation by this protein is required for the expression of genes which control neuronal development. The polypeptide is Transcription elongation factor SPT4 (supt4h1) (Danio rerio (Zebrafish)).